The following is a 121-amino-acid chain: Basic phospholipase A2 BmjeTX-II (121 aa).

7 disulfide bridges follow: cysteine 26–cysteine 114, cysteine 28–cysteine 45, cysteine 44–cysteine 95, cysteine 50–cysteine 121, cysteine 51–cysteine 88, cysteine 58–cysteine 82, and cysteine 76–cysteine 86. The Ca(2+) site is built by tyrosine 27, glycine 29, and glycine 31. Residue histidine 48 is part of the active site. Aspartate 49 contributes to the Ca(2+) binding site. The active site involves aspartate 89.

It depends on Ca(2+) as a cofactor. Expressed by the venom gland.

The protein resides in the secreted. The catalysed reaction is a 1,2-diacyl-sn-glycero-3-phosphocholine + H2O = a 1-acyl-sn-glycero-3-phosphocholine + a fatty acid + H(+). In terms of biological role, snake venom phospholipase A2 (PLA2) that induces blockade of neuromuscular contraction in an indirectly stimulated chick biventer cervicis nerve-muscle preparation. Does not inhibit contraction of chick biventer cervicic nerve-muscle preparation in response to treatment with acetylcholine or KCl. The neuromuscular blockade is mediated by inhibitory action at the presynaptic motor nerve endings. Lyses skeletal myoblasts and myotubes in vitro, and intramuscular injection causes local muscle necrosis. Induces edema in the mouse foot pad. Induces a transient increase of IL-6 levels. PLA2 catalyzes the calcium-dependent hydrolysis of the 2-acyl groups in 3-sn-phosphoglycerides. In Bothrops marajoensis (Marajo lancehead), this protein is Basic phospholipase A2 BmjeTX-II.